The sequence spans 121 residues: uncharacterized protein (121 aa).

A helical membrane pass occupies residues 65-84; that stretch reads TILFYTPTLICFLFLQNFLY.

The protein resides in the membrane. This is an uncharacterized protein from Saccharomyces cerevisiae (strain ATCC 204508 / S288c) (Baker's yeast).